The sequence spans 564 residues: DNA ligase B (564 aa).

The active-site N6-AMP-lysine intermediate is the Lys130.

This sequence belongs to the NAD-dependent DNA ligase family. LigB subfamily.

The enzyme catalyses NAD(+) + (deoxyribonucleotide)n-3'-hydroxyl + 5'-phospho-(deoxyribonucleotide)m = (deoxyribonucleotide)n+m + AMP + beta-nicotinamide D-nucleotide.. Catalyzes the formation of phosphodiester linkages between 5'-phosphoryl and 3'-hydroxyl groups in double-stranded DNA using NAD as a coenzyme and as the energy source for the reaction. The sequence is that of DNA ligase B from Klebsiella pneumoniae subsp. pneumoniae (strain ATCC 700721 / MGH 78578).